The primary structure comprises 493 residues: Kelch-like protein 42 (493 aa).

Residues 5 to 77 (EMVQIRLEDR…INAGGAREGW (73 aa)) enclose the BTB domain. Kelch repeat units follow at residues 183 to 241 (VLVA…ILDN), 242 to 289 (YLFI…AVNS), 291 to 332 (LYAI…ECKG), 334 to 379 (IYVI…SVEE), 381 to 436 (IYIV…ALHN), and 438 to 487 (GIYI…SLYL).

In terms of assembly, component of the BCR(KLHL42) E3 ubiquitin ligase complex, at least composed of CUL3 and KLHL42. Interacts (via the BTB domain) with CUL3. Interacts (via the kelch domains) with KATNA1.

It is found in the cytoplasm. The protein resides in the cytoskeleton. Its subcellular location is the spindle. Its pathway is protein modification; protein ubiquitination. In terms of biological role, substrate-specific adapter of a BCR (BTB-CUL3-RBX1) E3 ubiquitin-protein ligase complex required for mitotic progression and cytokinesis. The BCR(KLHL42) E3 ubiquitin ligase complex mediates the ubiquitination and subsequent degradation of KATNA1. Involved in microtubule dynamics throughout mitosis. This is Kelch-like protein 42 (Klhl42) from Mus musculus (Mouse).